The sequence spans 104 residues: SOSS complex subunit C (104 aa).

The protein belongs to the SOSS-C family. As to quaternary structure, belongs to the multiprotein complex Integrator. Component of the SOSS complex, composed of SOSS-B (SOSS-B1/NABP2 or SOSS-B2/NABP1), SOSS-A/INTS3 and SOSS-C/INIP.

The protein localises to the nucleus. In terms of biological role, component of the SOSS complex, a multiprotein complex that functions downstream of the MRN complex to promote DNA repair and G2/M checkpoint. The SOSS complex associates with single-stranded DNA at DNA lesions and influences diverse endpoints in the cellular DNA damage response including cell-cycle checkpoint activation, recombinational repair and maintenance of genomic stability. Required for efficient homologous recombination-dependent repair of double-strand breaks (DSBs). The sequence is that of SOSS complex subunit C (INIP) from Taeniopygia guttata (Zebra finch).